We begin with the raw amino-acid sequence, 201 residues long: Small ribosomal subunit protein uS5 (201 aa).

Residues 1-27 (MAGPQRRGSGAGGGERRDRKGRDGGAA) form a disordered region. The segment covering 14-23 (GERRDRKGRD) has biased composition (basic and acidic residues). Positions 34–97 (YVERVVAINR…EEAKKHFFKV (64 aa)) constitute an S5 DRBM domain.

Belongs to the universal ribosomal protein uS5 family. Part of the 30S ribosomal subunit. Contacts proteins S4 and S8.

In terms of biological role, with S4 and S12 plays an important role in translational accuracy. Its function is as follows. Located at the back of the 30S subunit body where it stabilizes the conformation of the head with respect to the body. This Streptomyces avermitilis (strain ATCC 31267 / DSM 46492 / JCM 5070 / NBRC 14893 / NCIMB 12804 / NRRL 8165 / MA-4680) protein is Small ribosomal subunit protein uS5.